A 348-amino-acid chain; its full sequence is Dihydroorotase (348 aa).

His17 and His19 together coordinate Zn(2+). Residues 19–21 (HLR) and Asn45 each bind substrate. Zn(2+) contacts are provided by Lys103, His140, and His178. An N6-carboxylysine modification is found at Lys103. His140 serves as a coordination point for substrate. Leu223 contributes to the substrate binding site. Asp251 lines the Zn(2+) pocket. Asp251 is a catalytic residue. Residues His255 and Ala267 each coordinate substrate.

It belongs to the metallo-dependent hydrolases superfamily. DHOase family. Class II DHOase subfamily. Homodimer. The cofactor is Zn(2+).

The catalysed reaction is (S)-dihydroorotate + H2O = N-carbamoyl-L-aspartate + H(+). The protein operates within pyrimidine metabolism; UMP biosynthesis via de novo pathway; (S)-dihydroorotate from bicarbonate: step 3/3. Catalyzes the reversible cyclization of carbamoyl aspartate to dihydroorotate. The sequence is that of Dihydroorotase from Escherichia coli O139:H28 (strain E24377A / ETEC).